The following is a 99-amino-acid chain: Aspartyl/glutamyl-tRNA(Asn/Gln) amidotransferase subunit C (99 aa).

It belongs to the GatC family. As to quaternary structure, heterotrimer of A, B and C subunits.

It carries out the reaction L-glutamyl-tRNA(Gln) + L-glutamine + ATP + H2O = L-glutaminyl-tRNA(Gln) + L-glutamate + ADP + phosphate + H(+). The catalysed reaction is L-aspartyl-tRNA(Asn) + L-glutamine + ATP + H2O = L-asparaginyl-tRNA(Asn) + L-glutamate + ADP + phosphate + 2 H(+). Functionally, allows the formation of correctly charged Asn-tRNA(Asn) or Gln-tRNA(Gln) through the transamidation of misacylated Asp-tRNA(Asn) or Glu-tRNA(Gln) in organisms which lack either or both of asparaginyl-tRNA or glutaminyl-tRNA synthetases. The reaction takes place in the presence of glutamine and ATP through an activated phospho-Asp-tRNA(Asn) or phospho-Glu-tRNA(Gln). The chain is Aspartyl/glutamyl-tRNA(Asn/Gln) amidotransferase subunit C from Cupriavidus taiwanensis (strain DSM 17343 / BCRC 17206 / CCUG 44338 / CIP 107171 / LMG 19424 / R1) (Ralstonia taiwanensis (strain LMG 19424)).